Reading from the N-terminus, the 552-residue chain is Arginine--tRNA ligase (552 aa).

The 'HIGH' region signature appears at 124 to 134 (GNPTGPLHLAH).

The protein belongs to the class-I aminoacyl-tRNA synthetase family. Monomer.

The protein localises to the cytoplasm. The catalysed reaction is tRNA(Arg) + L-arginine + ATP = L-arginyl-tRNA(Arg) + AMP + diphosphate. The sequence is that of Arginine--tRNA ligase from Tropheryma whipplei (strain Twist) (Whipple's bacillus).